Reading from the N-terminus, the 337-residue chain is Regulator of RpoS (337 aa).

One can recognise a Response regulatory domain in the interval 9–123 (QILIVEDEQV…NRLREMVFAC (115 aa)). At aspartate 58 the chain carries 4-aspartylphosphate.

Belongs to the RssB family. Binds to RpoS. Phosphorylated. Phosphorylation stimulates the interaction with RpoS and, therefore, the proteolysis of RpoS.

Its function is as follows. Regulates the turnover of the sigma S factor (RpoS) by promoting its proteolysis in exponentially growing cells. Acts by binding and delivering RpoS to the ClpXP protease. RssB is not co-degraded with RpoS, but is released from the complex and can initiate a new cycle of RpoS recognition and degradation. In Shigella flexneri, this protein is Regulator of RpoS.